A 472-amino-acid chain; its full sequence is 3-isopropylmalate dehydratase large subunit (472 aa).

The [4Fe-4S] cluster site is built by cysteine 351, cysteine 412, and cysteine 415.

It belongs to the aconitase/IPM isomerase family. LeuC type 1 subfamily. Heterodimer of LeuC and LeuD. The cofactor is [4Fe-4S] cluster.

The enzyme catalyses (2R,3S)-3-isopropylmalate = (2S)-2-isopropylmalate. Its pathway is amino-acid biosynthesis; L-leucine biosynthesis; L-leucine from 3-methyl-2-oxobutanoate: step 2/4. Functionally, catalyzes the isomerization between 2-isopropylmalate and 3-isopropylmalate, via the formation of 2-isopropylmaleate. The polypeptide is 3-isopropylmalate dehydratase large subunit (Marinobacter nauticus (strain ATCC 700491 / DSM 11845 / VT8) (Marinobacter aquaeolei)).